The following is a 120-amino-acid chain: Cytochrome c2 iso-1 (120 aa).

At Q1 the chain carries Pyrrolidone carboxylic acid. C15, C18, H19, and M98 together coordinate heme c.

It belongs to the cytochrome c family. In terms of processing, binds 1 heme c group covalently per subunit.

In terms of biological role, cytochrome c2 is found mainly in purple, non-sulfur, photosynthetic bacteria where it functions as the electron donor to the oxidized bacteriochlorophyll in the photophosphorylation pathway. However, it may also have a role in the respiratory chain and is found in some non-photosynthetic bacteria. This is Cytochrome c2 iso-1 from Rhodospirillum centenum (Rhodocista centenaria).